A 433-amino-acid polypeptide reads, in one-letter code: N-lysine methyltransferase SMYD2 (433 aa).

Residues 7–241 (GGLERFCSPG…PGEEVFTSYI (235 aa)) enclose the SET domain. 17–19 (KGR) provides a ligand contact to S-adenosyl-L-methionine. Zn(2+)-binding residues include cysteine 52, cysteine 55, cysteine 65, cysteine 68, cysteine 74, cysteine 78, histidine 86, and cysteine 90. An MYND-type zinc finger spans residues 52–90 (CEFCFARKEGLSKCGRCKQAFYCNVECQREDWPMHKLEC). Residues histidine 137, 206 to 207 (NH), and 258 to 260 (YFF) each bind S-adenosyl-L-methionine.

Belongs to the class V-like SAM-binding methyltransferase superfamily. In terms of assembly, interacts with RNA polymerase II and HELZ. Interacts with SIN3A and HDAC1. Interacts (via MYND-type zinc finger) with EPB41L3. Interacts (via SET domain) with p53/TP53. Interacts with RB1 and HSP90AA1.

Its subcellular location is the cytoplasm. It localises to the cytosol. It is found in the nucleus. It carries out the reaction L-lysyl(4)-[histone H3] + 3 S-adenosyl-L-methionine = N(6),N(6),N(6)-trimethyl-L-lysyl(4)-[histone H3] + 3 S-adenosyl-L-homocysteine + 3 H(+). The catalysed reaction is L-lysyl-[protein] + S-adenosyl-L-methionine = N(6)-methyl-L-lysyl-[protein] + S-adenosyl-L-homocysteine + H(+). Functionally, protein-lysine N-methyltransferase that methylates both histones and non-histone proteins, including p53/TP53 and RB1. Specifically trimethylates histone H3 'Lys-4' (H3K4me3) in vivo. The activity requires interaction with HSP90alpha. Shows even higher methyltransferase activity on p53/TP53. Monomethylates 'Lys-370' of p53/TP53, leading to decreased DNA-binding activity and subsequent transcriptional regulation activity of p53/TP53. Monomethylates RB1 at 'Lys-860'. The polypeptide is N-lysine methyltransferase SMYD2 (SMYD2) (Bos taurus (Bovine)).